The chain runs to 347 residues: GMP reductase (347 aa).

108 to 131 (ADFEKTVQILALDPALNFVCIDVA) contacts NADP(+). Positions 181 and 183 each coordinate K(+). The active-site Thioimidate intermediate is the cysteine 186. Position 216 to 239 (216 to 239 (IVSDGGCTMPGDVAKAFGGGADFV)) interacts with NADP(+).

It belongs to the IMPDH/GMPR family. GuaC type 1 subfamily. Homotetramer.

The catalysed reaction is IMP + NH4(+) + NADP(+) = GMP + NADPH + 2 H(+). In terms of biological role, catalyzes the irreversible NADPH-dependent deamination of GMP to IMP. It functions in the conversion of nucleobase, nucleoside and nucleotide derivatives of G to A nucleotides, and in maintaining the intracellular balance of A and G nucleotides. The protein is GMP reductase of Salmonella paratyphi B (strain ATCC BAA-1250 / SPB7).